The following is a 258-amino-acid chain: Imidazole glycerol phosphate synthase subunit HisF (258 aa).

Residues Asp-12 and Asp-131 contribute to the active site.

Belongs to the HisA/HisF family. As to quaternary structure, heterodimer of HisH and HisF.

It is found in the cytoplasm. The enzyme catalyses 5-[(5-phospho-1-deoxy-D-ribulos-1-ylimino)methylamino]-1-(5-phospho-beta-D-ribosyl)imidazole-4-carboxamide + L-glutamine = D-erythro-1-(imidazol-4-yl)glycerol 3-phosphate + 5-amino-1-(5-phospho-beta-D-ribosyl)imidazole-4-carboxamide + L-glutamate + H(+). Its pathway is amino-acid biosynthesis; L-histidine biosynthesis; L-histidine from 5-phospho-alpha-D-ribose 1-diphosphate: step 5/9. IGPS catalyzes the conversion of PRFAR and glutamine to IGP, AICAR and glutamate. The HisF subunit catalyzes the cyclization activity that produces IGP and AICAR from PRFAR using the ammonia provided by the HisH subunit. The sequence is that of Imidazole glycerol phosphate synthase subunit HisF from Nitrosomonas eutropha (strain DSM 101675 / C91 / Nm57).